A 313-amino-acid polypeptide reads, in one-letter code: Methionyl-tRNA formyltransferase (313 aa).

109–112 provides a ligand contact to (6S)-5,6,7,8-tetrahydrofolate; the sequence is SLLP.

The protein belongs to the Fmt family.

It carries out the reaction L-methionyl-tRNA(fMet) + (6R)-10-formyltetrahydrofolate = N-formyl-L-methionyl-tRNA(fMet) + (6S)-5,6,7,8-tetrahydrofolate + H(+). Attaches a formyl group to the free amino group of methionyl-tRNA(fMet). The formyl group appears to play a dual role in the initiator identity of N-formylmethionyl-tRNA by promoting its recognition by IF2 and preventing the misappropriation of this tRNA by the elongation apparatus. This chain is Methionyl-tRNA formyltransferase, found in Thermotoga neapolitana (strain ATCC 49049 / DSM 4359 / NBRC 107923 / NS-E).